A 152-amino-acid polypeptide reads, in one-letter code: Ribonuclease H (152 aa).

One can recognise an RNase H type-1 domain in the interval 1-142 (MGSKVVIYTD…ADKLAVQGRE (142 aa)). Positions 10, 48, 70, and 134 each coordinate Mg(2+).

It belongs to the RNase H family. In terms of assembly, monomer. It depends on Mg(2+) as a cofactor.

Its subcellular location is the cytoplasm. The catalysed reaction is Endonucleolytic cleavage to 5'-phosphomonoester.. In terms of biological role, endonuclease that specifically degrades the RNA of RNA-DNA hybrids. The chain is Ribonuclease H from Rickettsia massiliae (strain Mtu5).